We begin with the raw amino-acid sequence, 234 residues long: MAHARDKAGAVMAMILICETSLIWTSSGSSTASAGNVTGTTAVTTPSPSASGPSTNQSTTLTTTSAPITTTAILSTNTTTVTFTGTTVTPVPTTSNASTINVTTKVTAQNITATEAGTGTSTGVTSNVTTRSSSTTSATTRITNATTLAPTLSSKGTSNATKTTAELPTVPDERQPSLSYGLPLWTLVFVGLTFLMLILIFAAGLMMSAKNKPLDEALLTNAVTRDPSLYKGLV.

The signal sequence occupies residues 1–28; the sequence is MAHARDKAGAVMAMILICETSLIWTSSG. The interval 29-62 is disordered; sequence SSTASAGNVTGTTAVTTPSPSASGPSTNQSTTLT. N-linked (GlcNAc...) asparagine; by host glycosylation is found at Asn-36, Asn-56, Asn-77, Asn-96, Asn-101, Asn-110, Asn-127, Asn-144, and Asn-159. A disordered region spans residues 116–138; that stretch reads AGTGTSTGVTSNVTTRSSSTTSA. A helical membrane pass occupies residues 187–207; the sequence is LVFVGLTFLMLILIFAAGLMM.

It belongs to the Epstein-Barr virus BDLF3 protein family.

The protein localises to the membrane. This Homo sapiens (Human) protein is Glycoprotein BDLF3.